The primary structure comprises 119 residues: Large ribosomal subunit protein uL22 (119 aa).

It belongs to the universal ribosomal protein uL22 family. In terms of assembly, part of the 50S ribosomal subunit.

In terms of biological role, this protein binds specifically to 23S rRNA; its binding is stimulated by other ribosomal proteins, e.g. L4, L17, and L20. It is important during the early stages of 50S assembly. It makes multiple contacts with different domains of the 23S rRNA in the assembled 50S subunit and ribosome. The globular domain of the protein is located near the polypeptide exit tunnel on the outside of the subunit, while an extended beta-hairpin is found that lines the wall of the exit tunnel in the center of the 70S ribosome. This chain is Large ribosomal subunit protein uL22, found in Chlorobium phaeobacteroides (strain DSM 266 / SMG 266 / 2430).